A 1048-amino-acid chain; its full sequence is Probable histidine kinase 2 (1048 aa).

At 1–16 (MREVEEVSKWRRRCCY) the chain is on the cytoplasmic side. Residues 17–37 (FWILFPLAVIATCMTITVVTF) form a helical membrane-spanning segment. The Extracellular portion of the chain corresponds to 38 to 336 (CSSTMYMTEV…AMVGVFRRGG (299 aa)). A helical membrane pass occupies residues 337–357 (VTMVAVACAAAAAATVACVLM). Over 358–1048 (ARALRRAVAR…AVHGVCKGKN (691 aa)) the chain is Cytoplasmic. One can recognise a Histidine kinase domain in the interval 398 to 662 (SASHDIRSAL…CFGFNVLLKT (265 aa)). His-401 bears the Phosphohistidine; by autocatalysis mark. The 133-residue stretch at 912–1044 (HVLLVEDTLV…RIVEAVHGVC (133 aa)) folds into the Response regulatory domain. Asp-975 is subject to 4-aspartylphosphate.

Post-translationally, activation probably requires a transfer of a phosphate group between a His in the transmitter domain and an Asp of the receiver domain.

The protein resides in the cell membrane. The enzyme catalyses ATP + protein L-histidine = ADP + protein N-phospho-L-histidine.. Cytokinin receptor related to bacterial two-component regulators. Functions as a histidine kinase and transmits the stress signal to a downstream MAPK cascade. This is Probable histidine kinase 2 from Oryza sativa subsp. indica (Rice).